We begin with the raw amino-acid sequence, 462 residues long: GTPase Der (462 aa).

EngA-type G domains follow at residues 3–166 and 175–348; these read PVIA…TTET and IKIA…HSAI. GTP-binding positions include 9-16, 56-60, 118-121, 181-188, 228-232, and 293-296; these read GRPNVGKS, DTGGI, NKTD, DTAGV, and NKWD. Residues 349–433 form the KH-like domain; it reads QSFSTPKLTR…PLKIEFKGGQ (85 aa).

Belongs to the TRAFAC class TrmE-Era-EngA-EngB-Septin-like GTPase superfamily. EngA (Der) GTPase family. Associates with the 50S ribosomal subunit.

Its function is as follows. GTPase that plays an essential role in the late steps of ribosome biogenesis. In Legionella pneumophila (strain Paris), this protein is GTPase Der.